A 1370-amino-acid chain; its full sequence is Putative Polycomb group protein ASXL2 (1370 aa).

The region spanning 11-86 (RTWAEAAKTV…RMGVYTLKKD (76 aa)) is the HTH HARE-type domain. The disordered stretch occupies residues 92–216 (KELSECSEES…DSVPAKPGQM (125 aa)). The segment covering 103–120 (DGQSDSHSSDNSSSSDGG) has biased composition (low complexity). The segment covering 141–152 (PPSPPSGCPSPT) has biased composition (pro residues). The residue at position 150 (serine 150) is a Phosphoserine. The short motif at 178–182 (QQKKK) is the Nuclear localization signal element. A compositionally biased stretch (polar residues) spans 186–198 (CRPSMSISNQHLS). One can recognise a DEUBAD domain in the interval 229–338 (PDSILVNTNL…FENYYGQSSG (110 aa)). The LXXLL motif motif lies at 258–262 (LLLLL). 2 disordered regions span residues 340–487 (SLED…AGLQ) and 516–535 (QESLKRKSSLTDEEATSSWE). Residues 398–412 (QKEENQDEARPDSKS) are compositionally biased toward basic and acidic residues. Serine 477, serine 524, serine 553, and serine 590 each carry phosphoserine. Asymmetric dimethylarginine is present on arginine 594. Serine 601 is subject to Phosphoserine. Over residues 643 to 652 (IPGPGPGGGQ) the composition is skewed to gly residues. Disordered stretches follow at residues 643-734 (IPGP…LASS), 805-891 (PKAG…SSIP), and 1103-1175 (GHAD…VSEQ). Composition is skewed to polar residues over residues 719–734 (AQLQQTSSVPTGLASS) and 830–839 (MTSSPVTTAS). Residues 849-870 (SGTATSTGSAPSSSTLPAASSL) show a composition bias toward low complexity. Polar residues predominate over residues 871–891 (KTPGTSANMNGPISRTSSSIP). A compositionally biased stretch (acidic residues) spans 1119–1131 (DESDEDRVGDEQE). A phosphoserine mark is found at serine 1121 and serine 1254. The segment at 1332-1369 (PSKCYCRLKAMIMCKGCGAFCHDDCIGPSKLCVSCLVV) adopts a PHD-type; atypical zinc-finger fold.

This sequence belongs to the Asx family. As to quaternary structure, core component of the polycomb repressive deubiquitinase (PR-DUB) complex, at least composed of BAP1, one of ASXL1, ASXL2 or (probably) ASXL3, and one of MBD5 or MBD6. Distinct combinations of ASXL and MBD proteins may preferentially bind specific histone modification marks. The PR-DUB core associates with a number of accessory proteins, including FOXK1, FOXK2, KDM1B, HCFC1 and OGT; KDM1B specifically associates with ASXL2 PR-DUB complexes. Interacts (via PHD domain) with MBD5 and MBD6 (via MBD domain); the interaction is probably direct and mediates association of MBD proteins with the PR-DUB core. Interacts with PPARA and PPARG.

Its subcellular location is the nucleus. Putative Polycomb group (PcG) protein. PcG proteins act by forming multiprotein complexes, which are required to maintain the transcriptionally repressive state of homeotic genes throughout development. PcG proteins are not required to initiate repression, but to maintain it during later stages of development. They probably act via methylation of histones, rendering chromatin heritably changed in its expressibility. Involved in transcriptional regulation mediated by ligand-bound nuclear hormone receptors, such as peroxisome proliferator-activated receptor gamma (PPARG). Acts as a coactivator for PPARG and enhances its adipocyte differentiation-inducing activity; the function seems to involve differential recruitment of acetylated and methylated histone H3. Non-catalytic component of the PR-DUB complex, a complex that specifically mediates deubiquitination of histone H2A monoubiquitinated at 'Lys-119' (H2AK119ub1). The PR-DUB complex is an epigenetic regulator of gene expression and acts as a transcriptional coactivator, affecting genes involved in development, cell communication, signaling, cell proliferation and cell viability. ASXL1, ASXL2 and ASXL3 function redundantly in the PR-DUB complex. The ASXL proteins are essential for chromatin recruitment and transcriptional activation of associated genes. ASXL1 and ASXL2 are important for BAP1 protein stability. The protein is Putative Polycomb group protein ASXL2 (Asxl2) of Mus musculus (Mouse).